Here is a 160-residue protein sequence, read N- to C-terminus: Ribosomal RNA large subunit methyltransferase H (160 aa).

Residues L76, G108, and 127–132 contribute to the S-adenosyl-L-methionine site; that span reads FGALTW.

This sequence belongs to the RNA methyltransferase RlmH family. Homodimer.

The protein localises to the cytoplasm. It carries out the reaction pseudouridine(1915) in 23S rRNA + S-adenosyl-L-methionine = N(3)-methylpseudouridine(1915) in 23S rRNA + S-adenosyl-L-homocysteine + H(+). In terms of biological role, specifically methylates the pseudouridine at position 1915 (m3Psi1915) in 23S rRNA. The protein is Ribosomal RNA large subunit methyltransferase H of Mesorhizobium japonicum (strain LMG 29417 / CECT 9101 / MAFF 303099) (Mesorhizobium loti (strain MAFF 303099)).